Consider the following 137-residue polypeptide: UPF0275 protein PM0489 (137 aa).

The protein belongs to the UPF0275 family.

This is UPF0275 protein PM0489 from Pasteurella multocida (strain Pm70).